We begin with the raw amino-acid sequence, 281 residues long: Shikimate dehydrogenase (NADP(+)) (281 aa).

Shikimate is bound by residues 19–21 (SFS) and Thr-66. The active-site Proton acceptor is the Lys-70. Shikimate-binding residues include Asn-91 and Asp-104. NADP(+) contacts are provided by residues 127-131 (GAGGA) and Ile-223. Position 225 (Tyr-225) interacts with shikimate. Residue Gly-246 coordinates NADP(+).

This sequence belongs to the shikimate dehydrogenase family. In terms of assembly, homodimer.

The enzyme catalyses shikimate + NADP(+) = 3-dehydroshikimate + NADPH + H(+). It participates in metabolic intermediate biosynthesis; chorismate biosynthesis; chorismate from D-erythrose 4-phosphate and phosphoenolpyruvate: step 4/7. Its function is as follows. Involved in the biosynthesis of the chorismate, which leads to the biosynthesis of aromatic amino acids. Catalyzes the reversible NADPH linked reduction of 3-dehydroshikimate (DHSA) to yield shikimate (SA). The chain is Shikimate dehydrogenase (NADP(+)) from Methanobrevibacter smithii (strain ATCC 35061 / DSM 861 / OCM 144 / PS).